The primary structure comprises 769 residues: MEPRSLQLLEFPKVLNVLSGHCVSTSGAEACLALSPMDDAGSINSTAQFFRQGQNFVKETGFRLGTFPPLEGLFQYLVKPNNVLDADALYALVQTLGQARTLKEALEIAEKREWDTILEFLEGVSWPEKTFSGLKRCLDQDGNIKDESSPELYDIRQSIRSLHQRCSKKVRDFIHGEDISRFLQDDFMTITNDRYVLPLKTNFKGRLQGIVHDYSNTGETCYFEPMFLVELNNSMQELKQQERTEELKILTYLTGLVRSEYDQCEAAYGFLVEYDVLQAKINFADAVKAVAVDVQSGAGFDLRGARHPLLASAVGGVNPLNIELPTDQKVLIVSGGNAGGKTVCLKTVGLLSAMAFSGIPVPVEKGSVLPLFKEIFVIMGDEQSLEENVSTFSAQIQSISRIWDSMDSSTLFILDEFGSGTDPAQGAALAQAVVDGLLENGVTCFAATHFPALKTYALVTEGVRAASVLFDPSTKKPLFSLAYDQVGASIALDVAREHGFPESLLAKAEQYLLMEGSDSGSVMNRLNELAVSREKELEEMDRIKAKLESKRAKLEEKFERERLTVLADVKKQAQSVLKEWQDGKIGRKQALKKLSEARSTIGGDEKPKSDVKPFSFDDIKVGKPILNISWNRKGVVIEKDERKKRVKVDMDGVAMWIPADQLGPVGKKAVQEKVRQVTEKADKKAPKGEMTLKIDLRGKRADVAISELDRFFDQALLRGATELEIVHGRGTGALRREVHIFLDDNPAVAGYSLAPEDRGGDGMTEVELV.

Residue 335–342 (GGNAGGKT) participates in ATP binding. The Smr domain maps to 694–769 (IDLRGKRADV…GDGMTEVELV (76 aa)).

It belongs to the DNA mismatch repair MutS family. MutS2 subfamily. In terms of assembly, homodimer. Binds to stalled ribosomes, contacting rRNA.

In terms of biological role, endonuclease that is involved in the suppression of homologous recombination and thus may have a key role in the control of bacterial genetic diversity. Its function is as follows. Acts as a ribosome collision sensor, splitting the ribosome into its 2 subunits. Detects stalled/collided 70S ribosomes which it binds and splits by an ATP-hydrolysis driven conformational change. Acts upstream of the ribosome quality control system (RQC), a ribosome-associated complex that mediates the extraction of incompletely synthesized nascent chains from stalled ribosomes and their subsequent degradation. Probably generates substrates for RQC. This Maridesulfovibrio salexigens (strain ATCC 14822 / DSM 2638 / NCIMB 8403 / VKM B-1763) (Desulfovibrio salexigens) protein is Endonuclease MutS2.